The chain runs to 90 residues: Probable dynein light chain 2, cytoplasmic (90 aa).

It belongs to the dynein light chain family.

It is found in the cytoplasm. The protein localises to the cytoskeleton. Its function is as follows. Acts as one of several non-catalytic accessory components of a dynein complex. The sequence is that of Probable dynein light chain 2, cytoplasmic (dlc-2) from Caenorhabditis elegans.